A 120-amino-acid chain; its full sequence is Large ribosomal subunit protein uL24 (120 aa).

Belongs to the universal ribosomal protein uL24 family. Part of the 50S ribosomal subunit.

One of two assembly initiator proteins, it binds directly to the 5'-end of the 23S rRNA, where it nucleates assembly of the 50S subunit. In terms of biological role, located at the polypeptide exit tunnel on the outside of the subunit. The protein is Large ribosomal subunit protein uL24 of Archaeoglobus fulgidus (strain ATCC 49558 / DSM 4304 / JCM 9628 / NBRC 100126 / VC-16).